The following is a 763-amino-acid chain: Putative alpha-1,3-mannosyltransferase MNN15 (763 aa).

The Cytoplasmic segment spans residues 1-7 (MRFTLKK). Residues 8–28 (IFFVFLTLLIISIGYLLLQSV) traverse the membrane as a helical segment. Over 29–763 (DLQRIRELLH…KDATTVRLRI (735 aa)) the chain is Lumenal. 3 N-linked (GlcNAc...) asparagine glycosylation sites follow: Asn-71, Asn-157, and Asn-169. Residues 617–659 (LVPPDLPNQREPGSPPDTKPEMEFRKSWKSRKKDTDEINEKLP) are disordered. Positions 649–659 (KDTDEINEKLP) are enriched in basic and acidic residues.

The protein belongs to the MNN1/MNT family.

Its subcellular location is the golgi apparatus membrane. Its pathway is protein modification; protein glycosylation. Functionally, responsible for addition of the terminal mannose residues to the outer chain of core N-linked polysaccharides and to O-linked mannotriose. Implicated in late Golgi modifications. The sequence is that of Putative alpha-1,3-mannosyltransferase MNN15 (MNN15) from Candida albicans (strain SC5314 / ATCC MYA-2876) (Yeast).